We begin with the raw amino-acid sequence, 379 residues long: Sulfate adenylyltransferase (379 aa).

It belongs to the sulfate adenylyltransferase family.

The enzyme catalyses sulfate + ATP + H(+) = adenosine 5'-phosphosulfate + diphosphate. It participates in sulfur metabolism; hydrogen sulfide biosynthesis; sulfite from sulfate: step 1/3. The protein is Sulfate adenylyltransferase of Cenarchaeum symbiosum (strain A).